Here is a 1327-residue protein sequence, read N- to C-terminus: P-glycoprotein 14 (1327 aa).

A compositionally biased stretch (basic and acidic residues) spans 1 to 17 (MAPKDDPDNRGFDDQRR). The disordered stretch occupies residues 1–23 (MAPKDDPDNRGFDDQRRPSQRST). Over 1–104 (MAPKDDPDNR…RYGKKFDYLL (104 aa)) the chain is Cytoplasmic. Residues 105–125 (LFIGTICAIISGVSQPILALV) traverse the membrane as a helical segment. An ABC transmembrane type-1 1 domain is found at 106–394 (FIGTICAIIS…ISPHMMVLLN (289 aa)). Residues 126-151 (SGRVTNALLVYPPTSKQFRNKANENV) lie on the Extracellular side of the membrane. A helical transmembrane segment spans residues 152–172 (YIFLGIGIFISITNFIQYMCF). Over 173–225 (QHCCTRVMAQMRHRFVYSVLRQNAGWFDKNHSGTITTKLNDSMERIREGIGDK) the chain is Cytoplasmic. A helical transmembrane segment spans residues 226 to 246 (LGVLLRGFAMLIAAIVVAYIY). A topological domain (extracellular) is located at residue E247. Residues 248 to 268 (WRLASMMLGVAPTCCICMSLL) form a helical membrane-spanning segment. Over 269-331 (ARQMTSTTIK…KFAVWKGFWS (63 aa)) the chain is Cytoplasmic. Residues 332–352 (GFFGGLFFFWLFSFLGCGMLY) form a helical membrane-spanning segment. Topologically, residues 353 to 364 (GAYLLKVGIITT) are extracellular. The helical transmembrane segment at 365–385 (PGDVFIVVMSMLLGAYFLGLI) threads the bilayer. Topologically, residues 386-766 (SPHMMVLLNA…NAKGNYLYMF (381 aa)) are cytoplasmic. The ABC transporter 1 domain maps to 429 to 665 (VKFENVHFRY…GGRYFDLVKA (237 aa)). 464–471 (GHSGCGKS) contributes to the ATP binding site. The disordered stretch occupies residues 671–721 (DPEATEEFEEEEIDLDDTSRSSRRSSMTSARSGSEAFRRGNSLNDSFSGSK). Residues 673-686 (EATEEFEEEEIDLD) are compositionally biased toward acidic residues. Positions 694-704 (RSSMTSARSGS) are enriched in low complexity. Residues 711–721 (NSLNDSFSGSK) show a composition bias toward polar residues. An ABC transmembrane type-1 2 domain is found at 766-1053 (FLGTVFALIR…SAQYFPEFVK (288 aa)). The chain crosses the membrane as a helical span at residues 767–789 (LGTVFALIRGLELPALALIFGWV). The Extracellular segment spans residues 790 to 805 (FEGFTFVPYGGRMMHR). A helical membrane pass occupies residues 806–826 (MAMAVIAFASVGVGVWFSQLA). Residues 827-886 (SSVLFAVVSENLSMRFRVQSFRNLLYQDASYFDNPAHAPGKLITRLASDAPNIKAVVDAR) are Cytoplasmic-facing. A helical transmembrane segment spans residues 887–907 (MLQVIYALAAIIANIAIAFIY). The Extracellular portion of the chain corresponds to 908–910 (CWQ). A helical transmembrane segment spans residues 911–931 (IGILGTSLILLLAFVMIGLAY). Over 932–996 (KISLMNVEQI…KGMIEAINYS (65 aa)) the chain is Cytoplasmic. Residues 997–1017 (LTQSFMYFMMCFTYAVGIRII) form a helical membrane-spanning segment. The Extracellular segment spans residues 1018–1030 (YQGDKSSDDTFKG). The chain crosses the membrane as a helical span at residues 1031–1051 (IIAMMLGAVAVMNSAQYFPEF). Topologically, residues 1052–1327 (VKAKTAAGML…KLIKKQDLAV (276 aa)) are cytoplasmic. The 237-residue stretch at 1086–1322 (ILFENVKFSY…KGRYYKLIKK (237 aa)) folds into the ABC transporter 2 domain. 1121-1128 (GPSGSGKS) contacts ATP.

Belongs to the ABC transporter superfamily. ABCB family. Multidrug resistance exporter (TC 3.A.1.201) subfamily. In terms of tissue distribution, expressed in pharyngeal epithelial cells that surround the anterior pharyngeal cuticle. Shares same expression pattern as sms-5.

The protein resides in the apical cell membrane. Contributes to the establishment of a polar lipid barrier to block small molecule passage into the pharyngeal cuticle. Probably exports polar lipids into the developing pharyngeal cuticle to protect against xenobiotic insult. Likely functions in the same pathway as sphingomyelin synthase sms-5. The polypeptide is P-glycoprotein 14 (Caenorhabditis elegans).